Consider the following 577-residue polypeptide: Torulene dioxygenase (577 aa).

H239, H291, H361, and H570 together coordinate Fe(2+).

The protein belongs to the carotenoid oxygenase family. Requires Fe(2+) as cofactor.

The protein resides in the cytoplasm. It is found in the cytosol. The enzyme catalyses torulene + O2 = 4'-apo-beta-carotenal + 3-methyl-2-butenal. It participates in carotenoid biosynthesis. In terms of biological role, torulene dioxygenase; part of the pathway that mediates the biosynthesis of neurosporaxanthin, a carboxylic apocarotenoid acting as an essential protective pigments and leading to orange pigmentation. CarT mediates the cleavage of torulene into beta-apo-4'-carotenal, the aldehyde corresponding to the acidic neurosporaxanthin. Is also active on other monocyclic synthetic substrates such as beta-apo-8'-carotenal and beta-apo-10'-carotenal to produce beta-apo-14'-carotenal and retinal(beta-apo-15'-carotenal), respectively. Neurosporaxanthin is synthesized from geranyl-geranyl pyrophosphate (GGPP) through several enzymatic activities. Phytoene synthase activity performed by the bifunctional enzyme carAR first produces phytoene from geranyl-geranyl pyrophosphate (GGPP). The phytoene dehydrogenase carB then introduces 4 desaturations to lead to lycopene which is substrate of the carotene cyclase activity of carAR that leads to the production of gamma-carotene. CarB then performs a 5th desaturation reaction to yield torulene. Torulene is the substrate of the dioxidase carT that breaks the molecule, removing five carbon atoms to yield beta-apo-4'-carotenal, whereas the aldehyde dehydrogenase carD mediates the last step by converting beta-apo-4'-carotenal into neurosporaxanthin. The protein is Torulene dioxygenase of Fusarium fujikuroi (Bakanae and foot rot disease fungus).